The primary structure comprises 227 residues: DNA repair protein RecO (227 aa).

It belongs to the RecO family.

Its function is as follows. Involved in DNA repair and RecF pathway recombination. In Pseudomonas entomophila (strain L48), this protein is DNA repair protein RecO.